A 960-amino-acid polypeptide reads, in one-letter code: MFHSSAMVNSHRKPMFNIHRGFYCLTAILPQICICSQFSVPSSYHFTEDPGAFPVATNGERFPWQELRLPSVVIPLHYDLFVHPNLTSLDFVASEKIEVLVSNATQFIILHSKDLEITNATLQSEEDSRYMKPGKELKVLSYPAHEQIALLVPEKLTPHLKYYVAMDFQAKLGDGFEGFYKSTYRTLGGETRILAVTDFEPTQARMAFPCFDEPLFKANFSIKIRRESRHIALSNMPKVKTIELEGGLLEDHFETTVKMSTYLVAYIVCDFHSLSGFTSSGVKVSIYASPDKRNQTHYALQASLKLLDFYEKYFDIYYPLSKLDLIAIPDFAPGAMENWGLITYRETSLLFDPKTSSASDKLWVTRVIAHELAHQWFGNLVTMEWWNDIWLKEGFAKYMELIAVNATYPELQFDDYFLNVCFEVITKDSLNSSRPISKPAETPTQIQEMFDEVSYNKGACILNMLKDFLGEEKFQKGIIQYLKKFSYRNAKNDDLWSSLSNSCLESDFTSGGVCHSDPKMTSNMLAFLGENAEVKEMMTTWTLQKGIPLLVVKQDGCSLRLQQERFLQGVFQEDPEWRALQERYLWHIPLTYSTSSSNVIHRHILKSKTDTLDLPEKTSWVKFNVDSNGYYIVHYEGHGWDQLITQLNQNHTLLRPKDRVGLIHDVFQLVGAGRLTLDKALDMTYYLQHETSSPALLEGLSYLESFYHMMDRRNISDISENLKRYLLQYFKPVIDRQSWSDKGSVWDRMLRSALLKLACDLNHAPCIQKAAELFSQWMESSGKLNIPTDVLKIVYSVGAQTTAGWNYLLEQYELSMSSAEQNKILYALSTSKHQEKLLKLIELGMEGKVIKTQNLAALLHAIARRPKGQQLAWDFVRENWTHLLKKFDLGSYDIRMIISGTTAHFSSKDKLQEVKLFFESLEAQGSHLDIFQTVLETITKNIKWLEKNLPTLRTWLMVNT.

Residues 1–20 lie on the Cytoplasmic side of the membrane; the sequence is MFHSSAMVNSHRKPMFNIHR. A helical; Signal-anchor for type II membrane protein membrane pass occupies residues 21 to 40; that stretch reads GFYCLTAILPQICICSQFSV. Residues 41-960 lie on the Lumenal side of the membrane; sequence PSSYHFTEDP…TLRTWLMVNT (920 aa). 2 N-linked (GlcNAc...) asparagine glycosylation sites follow: N85 and N119. Residue E200 participates in substrate binding. Residue N219 is glycosylated (N-linked (GlcNAc...) asparagine). Residue 334 to 338 coordinates substrate; the sequence is GAMEN. H370 serves as a coordination point for Zn(2+). E371 functions as the Proton acceptor in the catalytic mechanism. Zn(2+) is bound by residues H374 and E393. N-linked (GlcNAc...) asparagine glycosylation is present at N405. An intrachain disulfide couples C421 to C460. Residue N650 is glycosylated (N-linked (GlcNAc...) asparagine). An intrachain disulfide couples C759 to C766.

It belongs to the peptidase M1 family. In terms of assembly, heterodimer with ERAP1. The cofactor is Zn(2+). N-glycosylated. Ubiquitously expressed. Highly expressed in spleen and leukocytes.

It localises to the endoplasmic reticulum membrane. Functionally, aminopeptidase that plays a central role in peptide trimming, a step required for the generation of most HLA class I-binding peptides. Peptide trimming is essential to customize longer precursor peptides to fit them to the correct length required for presentation on MHC class I molecules. Preferentially hydrolyzes the basic residues Arg and Lys. This chain is Endoplasmic reticulum aminopeptidase 2 (ERAP2), found in Homo sapiens (Human).